The sequence spans 197 residues: Ribonuclease HII (197 aa).

The region spanning 9–197 is the RNase H type-2 domain; sequence ELIAGVDEVG…APVKKALEQF (189 aa). 3 residues coordinate a divalent metal cation: aspartate 15, glutamate 16, and aspartate 107.

It belongs to the RNase HII family. Requires Mn(2+) as cofactor. Mg(2+) serves as cofactor.

The protein localises to the cytoplasm. The enzyme catalyses Endonucleolytic cleavage to 5'-phosphomonoester.. In terms of biological role, endonuclease that specifically degrades the RNA of RNA-DNA hybrids. This Haemophilus influenzae (strain PittGG) protein is Ribonuclease HII.